The sequence spans 193 residues: Ribonuclease HII (193 aa).

The region spanning 15-193 (YIVAGVDEAG…SYHRRSFKSC (179 aa)) is the RNase H type-2 domain. Positions 21, 22, and 112 each coordinate a divalent metal cation.

This sequence belongs to the RNase HII family. The cofactor is Mn(2+). It depends on Mg(2+) as a cofactor.

It is found in the cytoplasm. The catalysed reaction is Endonucleolytic cleavage to 5'-phosphomonoester.. Functionally, endonuclease that specifically degrades the RNA of RNA-DNA hybrids. The polypeptide is Ribonuclease HII (rnhB) (Rickettsia prowazekii (strain Madrid E)).